A 189-amino-acid chain; its full sequence is GTP cyclohydrolase 1 (189 aa).

3 residues coordinate Zn(2+): cysteine 78, histidine 81, and cysteine 150.

It belongs to the GTP cyclohydrolase I family. As to quaternary structure, toroid-shaped homodecamer, composed of two pentamers of five dimers.

The catalysed reaction is GTP + H2O = 7,8-dihydroneopterin 3'-triphosphate + formate + H(+). It functions in the pathway cofactor biosynthesis; 7,8-dihydroneopterin triphosphate biosynthesis; 7,8-dihydroneopterin triphosphate from GTP: step 1/1. The chain is GTP cyclohydrolase 1 from Listeria monocytogenes serovar 1/2a (strain ATCC BAA-679 / EGD-e).